The primary structure comprises 257 residues: tRNA (guanine-N(7)-)-methyltransferase (257 aa).

A disordered region spans residues 1 to 42 (MTVVVSDHQNPRPPGDDAAPLGRTGNRDRPPGSFFGRRKGHR). S-adenosyl-L-methionine-binding residues include Glu-84, Glu-109, Asp-136, and Asp-158. Asp-158 is an active-site residue. Residues Lys-162 and Asp-194 each coordinate substrate.

The protein belongs to the class I-like SAM-binding methyltransferase superfamily. TrmB family.

It catalyses the reaction guanosine(46) in tRNA + S-adenosyl-L-methionine = N(7)-methylguanosine(46) in tRNA + S-adenosyl-L-homocysteine. The protein operates within tRNA modification; N(7)-methylguanine-tRNA biosynthesis. Functionally, catalyzes the formation of N(7)-methylguanine at position 46 (m7G46) in tRNA. This Nitrobacter winogradskyi (strain ATCC 25391 / DSM 10237 / CIP 104748 / NCIMB 11846 / Nb-255) protein is tRNA (guanine-N(7)-)-methyltransferase.